Here is a 525-residue protein sequence, read N- to C-terminus: GMP synthase [glutamine-hydrolyzing] (525 aa).

The Glutamine amidotransferase type-1 domain occupies 8–207 (KILILDFGSQ…VMDICGCDNK (200 aa)). The active-site Nucleophile is cysteine 85. Residues histidine 181 and glutamate 183 contribute to the active site. A GMPS ATP-PPase domain is found at 208–400 (WQPASIIEDA…LGLPYDMLYR (193 aa)). Residue 235 to 241 (SGGVDSS) coordinates ATP.

In terms of assembly, homodimer.

The catalysed reaction is XMP + L-glutamine + ATP + H2O = GMP + L-glutamate + AMP + diphosphate + 2 H(+). Its pathway is purine metabolism; GMP biosynthesis; GMP from XMP (L-Gln route): step 1/1. Catalyzes the synthesis of GMP from XMP. This chain is GMP synthase [glutamine-hydrolyzing], found in Shewanella amazonensis (strain ATCC BAA-1098 / SB2B).